We begin with the raw amino-acid sequence, 201 residues long: uncharacterized protein (201 aa).

This is an uncharacterized protein from Acanthamoeba polyphaga mimivirus (APMV).